The sequence spans 29 residues: NADH dehydrogenase [ubiquinone] 1 beta subcomplex subunit 10 (29 aa).

Residues 1–29 (GRKKGVQFDEGAPDDFDPNNPYKKDVAFL) are disordered.

It belongs to the complex I NDUFB10 subunit family. Complex I is composed of about 45 different subunits.

It is found in the mitochondrion inner membrane. Functionally, accessory subunit of the mitochondrial membrane respiratory chain NADH dehydrogenase (Complex I), that is believed not to be involved in catalysis. Complex I functions in the transfer of electrons from NADH to the respiratory chain. The immediate electron acceptor for the enzyme is believed to be ubiquinone. This is NADH dehydrogenase [ubiquinone] 1 beta subcomplex subunit 10 from Solanum tuberosum (Potato).